A 207-amino-acid chain; its full sequence is Transcriptional regulator GfcR (207 aa).

The protein belongs to the purine/pyrimidine phosphoribosyltransferase family. GfcR subfamily.

This chain is Transcriptional regulator GfcR, found in Methanocella arvoryzae (strain DSM 22066 / NBRC 105507 / MRE50).